The following is a 117-amino-acid chain: Cell division protein FtsB (117 aa).

At 1-6 (MRDWRW) the chain is on the cytoplasmic side. A helical transmembrane segment spans residues 7–24 (MLLVLALLLGWLQYRFWF). At 25–117 (GPGNSGEVMM…QVGEHPADVP (93 aa)) the chain is on the periplasmic side. Positions 29–69 (SGEVMMLEAQVTNQERDNEGLQQRNDALAAEVKDLKEGQSA) form a coiled coil.

It belongs to the FtsB family. In terms of assembly, part of a complex composed of FtsB, FtsL and FtsQ.

It is found in the cell inner membrane. Essential cell division protein. May link together the upstream cell division proteins, which are predominantly cytoplasmic, with the downstream cell division proteins, which are predominantly periplasmic. This chain is Cell division protein FtsB, found in Stenotrophomonas maltophilia (strain R551-3).